Here is a 360-residue protein sequence, read N- to C-terminus: Biotin synthase (360 aa).

The tract at residues 1-25 (MQHAPLNFVPDAAKVPPTPGQSPNA) is disordered. In terms of domain architecture, Radical SAM core spans 58 to 285 (NAVQLSTLLS…KAMVRLSAGR (228 aa)). Residues C73, C77, and C80 each coordinate [4Fe-4S] cluster. 4 residues coordinate [2Fe-2S] cluster: C117, C148, C208, and R280. The disordered stretch occupies residues 340–360 (QAEGAQHSHSSHCHIDITPAD).

This sequence belongs to the radical SAM superfamily. Biotin synthase family. In terms of assembly, homodimer. It depends on [4Fe-4S] cluster as a cofactor. [2Fe-2S] cluster serves as cofactor.

It catalyses the reaction (4R,5S)-dethiobiotin + (sulfur carrier)-SH + 2 reduced [2Fe-2S]-[ferredoxin] + 2 S-adenosyl-L-methionine = (sulfur carrier)-H + biotin + 2 5'-deoxyadenosine + 2 L-methionine + 2 oxidized [2Fe-2S]-[ferredoxin]. Its pathway is cofactor biosynthesis; biotin biosynthesis; biotin from 7,8-diaminononanoate: step 2/2. Functionally, catalyzes the conversion of dethiobiotin (DTB) to biotin by the insertion of a sulfur atom into dethiobiotin via a radical-based mechanism. The protein is Biotin synthase of Ralstonia nicotianae (strain ATCC BAA-1114 / GMI1000) (Ralstonia solanacearum).